A 189-amino-acid chain; its full sequence is Cell division protein SepF (189 aa).

The disordered stretch occupies residues 25–70; that stretch reads ESRVQQQAVKPSNSRPAQQEPVRDIKQPRLVSSSSQHVTNTPSSNE. Polar residues-rich tracts occupy residues 27 to 41 and 54 to 70; these read RVQQ…SRPA and LVSS…SSNE.

The protein belongs to the SepF family. In terms of assembly, homodimer. Interacts with FtsZ.

It is found in the cytoplasm. Cell division protein that is part of the divisome complex and is recruited early to the Z-ring. Probably stimulates Z-ring formation, perhaps through the cross-linking of FtsZ protofilaments. Its function overlaps with FtsA. This is Cell division protein SepF from Streptococcus gordonii (strain Challis / ATCC 35105 / BCRC 15272 / CH1 / DL1 / V288).